Consider the following 622-residue polypeptide: Low affinity potassium transport system protein Kup (622 aa).

Helical transmembrane passes span 9 to 29, 49 to 69, 103 to 123, 137 to 157, 165 to 185, 213 to 233, 247 to 267, 276 to 296, 337 to 357, 363 to 383, 396 to 416, and 419 to 439; these read LPAITLAAIGVVYGDIGTSPL, VFGFLSLIFWLLIFVVSIKYL, VIMGLIGGSFFYGEVVITPAI, PQLDTWIVPLSIIVLTLLFMI, VGKLFAPIMLTWFLILAGLGL, VSFIALGAVVLSITGVEALYA, WFTVVLPSLTLNYFGQGALLL, PFFLLAPDWALIPLLIIAALA, IYIPFVNWMLYVAVVIVIVSF, LAAAYGIAVTGTMVLTSILST, FVALILIAFLCVDIPLFTANL, and LLSGGWLPLSLGTVMFIVMTT.

Belongs to the HAK/KUP transporter (TC 2.A.72) family.

Its subcellular location is the cell inner membrane. The catalysed reaction is K(+)(in) + H(+)(in) = K(+)(out) + H(+)(out). Functionally, responsible for the low-affinity transport of potassium into the cell. Likely operates as a K(+):H(+) symporter. This chain is Low affinity potassium transport system protein Kup, found in Shigella sonnei (strain Ss046).